Here is a 612-residue protein sequence, read N- to C-terminus: Dihydroxy-acid dehydratase (612 aa).

Residue Asp-81 participates in Mg(2+) binding. Residue Cys-122 coordinates [2Fe-2S] cluster. Asp-123 and Lys-124 together coordinate Mg(2+). An N6-carboxylysine modification is found at Lys-124. Position 195 (Cys-195) interacts with [2Fe-2S] cluster. Glu-491 is a Mg(2+) binding site. The active-site Proton acceptor is Ser-517.

It belongs to the IlvD/Edd family. In terms of assembly, homodimer. Requires [2Fe-2S] cluster as cofactor. It depends on Mg(2+) as a cofactor.

The enzyme catalyses (2R)-2,3-dihydroxy-3-methylbutanoate = 3-methyl-2-oxobutanoate + H2O. It carries out the reaction (2R,3R)-2,3-dihydroxy-3-methylpentanoate = (S)-3-methyl-2-oxopentanoate + H2O. Its pathway is amino-acid biosynthesis; L-isoleucine biosynthesis; L-isoleucine from 2-oxobutanoate: step 3/4. It functions in the pathway amino-acid biosynthesis; L-valine biosynthesis; L-valine from pyruvate: step 3/4. Functions in the biosynthesis of branched-chain amino acids. Catalyzes the dehydration of (2R,3R)-2,3-dihydroxy-3-methylpentanoate (2,3-dihydroxy-3-methylvalerate) into 2-oxo-3-methylpentanoate (2-oxo-3-methylvalerate) and of (2R)-2,3-dihydroxy-3-methylbutanoate (2,3-dihydroxyisovalerate) into 2-oxo-3-methylbutanoate (2-oxoisovalerate), the penultimate precursor to L-isoleucine and L-valine, respectively. This is Dihydroxy-acid dehydratase from Sinorhizobium medicae (strain WSM419) (Ensifer medicae).